A 269-amino-acid polypeptide reads, in one-letter code: Putative pyruvate, phosphate dikinase regulatory protein (269 aa).

ADP is bound at residue 147-154 (GLSRTSKT).

The protein belongs to the pyruvate, phosphate/water dikinase regulatory protein family. PDRP subfamily.

It catalyses the reaction N(tele)-phospho-L-histidyl/L-threonyl-[pyruvate, phosphate dikinase] + ADP = N(tele)-phospho-L-histidyl/O-phospho-L-threonyl-[pyruvate, phosphate dikinase] + AMP + H(+). The enzyme catalyses N(tele)-phospho-L-histidyl/O-phospho-L-threonyl-[pyruvate, phosphate dikinase] + phosphate + H(+) = N(tele)-phospho-L-histidyl/L-threonyl-[pyruvate, phosphate dikinase] + diphosphate. Its function is as follows. Bifunctional serine/threonine kinase and phosphorylase involved in the regulation of the pyruvate, phosphate dikinase (PPDK) by catalyzing its phosphorylation/dephosphorylation. This chain is Putative pyruvate, phosphate dikinase regulatory protein, found in Clostridium botulinum (strain 657 / Type Ba4).